The chain runs to 438 residues: Histidine--tRNA ligase (438 aa).

It belongs to the class-II aminoacyl-tRNA synthetase family. In terms of assembly, homodimer.

It localises to the cytoplasm. The enzyme catalyses tRNA(His) + L-histidine + ATP = L-histidyl-tRNA(His) + AMP + diphosphate + H(+). This is Histidine--tRNA ligase from Aromatoleum aromaticum (strain DSM 19018 / LMG 30748 / EbN1) (Azoarcus sp. (strain EbN1)).